We begin with the raw amino-acid sequence, 172 residues long: Light-harvesting complex-like protein OHP2, chloroplastic (172 aa).

The transit peptide at 1–43 directs the protein to the chloroplast; sequence MSVASPIQCIRILNPSSSSSSSTASSSFRFSTTTKPCVFIIRC. Topologically, residues 44-135 are stromal; that stretch reads SQTEGPLRRP…QPKNEISNGR (92 aa). A disordered region spans residues 45–90; that stretch reads QTEGPLRRPSAPPTLREPQKPVPPSQPSSSPPPSPPPQKAVAVDGK. Pro residues predominate over residues 64–82; that stretch reads KPVPPSQPSSSPPPSPPPQ. Residues 136 to 156 traverse the membrane as a helical segment; that stretch reads WAMFGFAVGMLTEYATGSDLV. The Lumenal segment spans residues 157 to 172; the sequence is DQVKILLSNFGILDLE.

This sequence belongs to the ELIP/psbS family. In terms of assembly, component of a high molecular weight complex containing OHP1, OHP2 and HCF244, and PSII core proteins D1/D2, HCF136 and HCF173. Forms a trimeric complex with OHP1 and HCF244 that mutually stabilizes each subunit.

The protein localises to the plastid. Its subcellular location is the chloroplast thylakoid membrane. Functionally, may play a photoprotective role within PSI in response to light stress. Forms a trimeric complex with OHP1 and HCF244 that is required to promote PSII core subunit assembly. The trimeric complex forms a transient PSII reaction center-like complex with PsbA, PsbD, PsbE, PsbF and PsbI subunits in thylakoids for early assembly of PSII as well as PSII repair. The trimeric complex is required for the recruitment of ribosomes to the psbA mRNA during PSII biogenesis and repair. Forms a heterodimer with OHP1 that binds chlorophylls and carotenoids, and that may function in the delivery of pigments to the PsbA subunit of PSII. The chain is Light-harvesting complex-like protein OHP2, chloroplastic from Arabidopsis thaliana (Mouse-ear cress).